The chain runs to 146 residues: Hemoglobin subunit beta (146 aa).

Valine 1 carries the N-acetylvaline modification. The Globin domain occupies 2–146; the sequence is HLTPEEKALV…VANALAHKYH (145 aa). Lysine 59 bears the N6-acetyllysine mark. Heme b is bound at residue histidine 63. Lysine 82 carries the post-translational modification N6-acetyllysine. Histidine 92 contacts heme b. Residue cysteine 93 is modified to S-nitrosocysteine. N6-acetyllysine is present on lysine 144.

This sequence belongs to the globin family. Heterotetramer of two alpha chains and two beta chains. In terms of tissue distribution, red blood cells.

Involved in oxygen transport from the lung to the various peripheral tissues. The chain is Hemoglobin subunit beta (HBB) from Trichechus inunguis (Amazon manatee).